A 423-amino-acid chain; its full sequence is Serpin B12 (423 aa).

Residues 63–72 (LSKDEHKEPN) are compositionally biased toward basic and acidic residues. The disordered stretch occupies residues 63-106 (LSKDEHKEPNDPSPQSESKASDSSLEGQKQTSASQDQQGESTND). The segment covering 75–106 (SPQSESKASDSSLEGQKQTSASQDQQGESTND) has biased composition (polar residues).

It belongs to the serpin family. Ov-serpin subfamily. As to quaternary structure, interacts with SLFN12; as part of a pathway regulating cell differentiation.

Its subcellular location is the cytoplasm. In terms of biological role, inhibits trypsin and plasmin, but not thrombin, coagulation factor Xa, or urokinase-type plasminogen activator. May play a role in cell differentiation. The polypeptide is Serpin B12 (Serpinb12) (Mus musculus (Mouse)).